A 1502-amino-acid polypeptide reads, in one-letter code: Gem-associated protein 5 (1502 aa).

The segment at 1–124 (MKPEPRTLPP…LHWSPTVKDL (124 aa)) is important for interaction with U1 snRNA. The interaction with U4 snRNA stretch occupies residues 13-15 (NWY). A Phosphoserine modification is found at Ser48. 11 WD repeats span residues 62-104 (GHTE…VVTE), 107-148 (LHQH…QHLF), 150-189 (EPRT…EVIH), 193-264 (GHDD…GVMV), 280-321 (TVKE…RRKY), 333-374 (HSRI…CCWT), 377-417 (SLGG…NNYD), 424-464 (GVKS…PPQI), 468-509 (YHKK…VVLQ), 533-573 (RYKL…LLCT), and 576-622 (QHHK…ESNP). Ser624 is subject to Phosphoserine. 2 WD repeats span residues 637-677 (GHTA…PLFN) and 680-720 (GHRG…HSRP). 2 disordered regions span residues 740 to 797 (KLKK…SPVV) and 819 to 838 (SSKA…EALL). Residue Lys754 forms a Glycyl lysine isopeptide (Lys-Gly) (interchain with G-Cter in SUMO2) linkage. Phosphoserine is present on residues Ser757, Ser770, and Ser778. Over residues 825-838 (LKKEPAKEKPEALL) the composition is skewed to basic and acidic residues. Ser845 bears the Phosphoserine mark. Disordered stretches follow at residues 1309 to 1338 (VSDK…LSAE) and 1378 to 1427 (HQKS…SLPE). Residues 1355–1382 (ASLQTSQRTVAEVQETLAEMIRQHQKSQ) are a coiled coil. A compositionally biased stretch (polar residues) spans 1380–1391 (KSQLCKATTNGP). Positions 1392–1407 (SRDEPSRDEPSQEAER) are enriched in basic and acidic residues.

The protein belongs to the WD repeat gemin-5 family. Part of the core SMN complex that contains SMN1, GEMIN2/SIP1, DDX20/GEMIN3, GEMIN4, GEMIN5, GEMIN6, GEMIN7, GEMIN8 and STRAP/UNRIP. Part of the SMN-Sm complex that contains SMN1, GEMIN2/SIP1, DDX20/GEMIN3, GEMIN4, GEMIN5, GEMIN6, GEMIN7, GEMIN8, STRAP/UNRIP and the Sm proteins SNRPB, SNRPD1, SNRPD2, SNRPD3, SNRPE, SNRPF and SNRPG. Interacts directly with SMN1, SNRPB, SNRPD1, SNRPD2, SNRPD3 and SNRPE. Identified in a SMN complex that contains GEMIN2/SIP1. Interacts with cytosolic DDX20/GEMIN3 and GEMIN4. Interacts with SNRNP70 and HNRNPU. Identified in a complex with 80S ribosomes; binds to the 60S large ribosomal subunit. Interacts with the ribosomal subunits RPL3 and RPL4.

It localises to the nucleus. The protein localises to the nucleoplasm. Its subcellular location is the gem. The protein resides in the cytoplasm. Its function is as follows. The SMN complex catalyzes the assembly of small nuclear ribonucleoproteins (snRNPs), the building blocks of the spliceosome, and thereby plays an important role in the splicing of cellular pre-mRNAs. Most spliceosomal snRNPs contain a common set of Sm proteins SNRPB, SNRPD1, SNRPD2, SNRPD3, SNRPE, SNRPF and SNRPG that assemble in a heptameric protein ring on the Sm site of the small nuclear RNA to form the core snRNP (Sm core). In the cytosol, the Sm proteins SNRPD1, SNRPD2, SNRPE, SNRPF and SNRPG are trapped in an inactive 6S pICln-Sm complex by the chaperone CLNS1A that controls the assembly of the core snRNP. To assemble core snRNPs, the SMN complex accepts the trapped 5Sm proteins from CLNS1A forming an intermediate. Binding of snRNA inside 5Sm ultimately triggers eviction of the SMN complex, thereby allowing binding of SNRPD3 and SNRPB to complete assembly of the core snRNP. Within the SMN complex, GEMIN5 recognizes and delivers the small nuclear RNAs (snRNAs) to the SMN complex. Binds to the 7-methylguanosine cap of RNA molecules. Binds to the 3'-UTR of SMN1 mRNA and regulates its translation; does not affect mRNA stability. May play a role in the regulation of protein synthesis via its interaction with ribosomes. This Mus musculus (Mouse) protein is Gem-associated protein 5 (Gemin5).